The chain runs to 424 residues: GTPase HflX (424 aa).

In terms of domain architecture, Hflx-type G spans 194-364 (YTVALTGYTG…AVVEMLPEKV (171 aa)). GTP is bound by residues 200–207 (GYTGAGKT), 225–229 (FATLS), 246–249 (DTIG), 314–317 (NKID), and 342–344 (SAA). Residues T207 and T227 each coordinate Mg(2+).

The protein belongs to the TRAFAC class OBG-HflX-like GTPase superfamily. HflX GTPase family. In terms of assembly, monomer. Associates with the 50S ribosomal subunit. Requires Mg(2+) as cofactor.

It localises to the cytoplasm. Its function is as follows. GTPase that associates with the 50S ribosomal subunit and may have a role during protein synthesis or ribosome biogenesis. The chain is GTPase HflX from Thermofilum pendens (strain DSM 2475 / Hrk 5).